A 432-amino-acid chain; its full sequence is Adenylosuccinate synthetase (432 aa).

GTP contacts are provided by residues 13–19 and 41–43; these read GDEGKGK and GHT. D14 (proton acceptor) is an active-site residue. 2 residues coordinate Mg(2+): D14 and G41. Residues 14–17, 39–42, T130, R144, Q225, T240, and R304 contribute to the IMP site; these read DEGK and NAGH. The active-site Proton donor is H42. Position 300–306 (300–306) interacts with substrate; sequence ATTGRRR. Residues R306, 332–334, and 415–417 each bind GTP; these read KLD and STG.

This sequence belongs to the adenylosuccinate synthetase family. In terms of assembly, homodimer. Requires Mg(2+) as cofactor.

The protein resides in the cytoplasm. It carries out the reaction IMP + L-aspartate + GTP = N(6)-(1,2-dicarboxyethyl)-AMP + GDP + phosphate + 2 H(+). It participates in purine metabolism; AMP biosynthesis via de novo pathway; AMP from IMP: step 1/2. In terms of biological role, plays an important role in the de novo pathway of purine nucleotide biosynthesis. Catalyzes the first committed step in the biosynthesis of AMP from IMP. This is Adenylosuccinate synthetase from Klebsiella pneumoniae subsp. pneumoniae (strain ATCC 700721 / MGH 78578).